Here is a 530-residue protein sequence, read N- to C-terminus: Phosphoenolpyruvate carboxykinase (ATP) (530 aa).

Residues arginine 60, tyrosine 195, and lysine 201 each contribute to the substrate site. ATP-binding positions include lysine 201, histidine 221, and 237-245 (GLSGTGKTT). Residues lysine 201 and histidine 221 each coordinate Mn(2+). A Mn(2+)-binding site is contributed by aspartate 258. Residues glutamate 286, arginine 324, 443-444 (RI), and serine 449 contribute to the ATP site. A substrate-binding site is contributed by arginine 324.

The protein belongs to the phosphoenolpyruvate carboxykinase (ATP) family. Requires Mn(2+) as cofactor.

It is found in the cytoplasm. The enzyme catalyses oxaloacetate + ATP = phosphoenolpyruvate + ADP + CO2. It functions in the pathway carbohydrate biosynthesis; gluconeogenesis. Involved in the gluconeogenesis. Catalyzes the conversion of oxaloacetate (OAA) to phosphoenolpyruvate (PEP) through direct phosphoryl transfer between the nucleoside triphosphate and OAA. In Pelobacter propionicus (strain DSM 2379 / NBRC 103807 / OttBd1), this protein is Phosphoenolpyruvate carboxykinase (ATP).